A 278-amino-acid chain; its full sequence is HTH-type transcriptional activator RhaS (278 aa).

The HTH araC/xylS-type domain occupies 174–272 (NLLLAWLEDH…NWSPRDIRQG (99 aa)). 2 DNA-binding regions (H-T-H motif) span residues 191–212 (DAVA…KQQT) and 239–262 (VTDI…RREF).

As to quaternary structure, binds DNA as a dimer.

Its subcellular location is the cytoplasm. Activates expression of the rhaBAD and rhaT operons. The sequence is that of HTH-type transcriptional activator RhaS from Escherichia coli O6:H1 (strain CFT073 / ATCC 700928 / UPEC).